Here is a 542-residue protein sequence, read N- to C-terminus: CTP synthase (542 aa).

An amidoligase domain region spans residues 1–265 (MTRYVFITGG…DREVLALFGI (265 aa)). Residue serine 13 participates in CTP binding. Residue serine 13 coordinates UTP. ATP-binding positions include 14–19 (SLGKGL) and aspartate 71. 2 residues coordinate Mg(2+): aspartate 71 and glutamate 139. Residues 146-148 (DIE), 186-191 (KTKPTQ), and lysine 222 each bind CTP. UTP contacts are provided by residues 186 to 191 (KTKPTQ) and lysine 222. 238–240 (RDV) provides a ligand contact to ATP. A Glutamine amidotransferase type-1 domain is found at 291–541 (SIAIVGKYTG…IGAAVVQSRL (251 aa)). Residue glycine 353 coordinates L-glutamine. The active-site Nucleophile; for glutamine hydrolysis is the cysteine 380. L-glutamine-binding positions include 381 to 384 (FGMQ), glutamate 404, and arginine 469. Residues histidine 514 and glutamate 516 contribute to the active site.

This sequence belongs to the CTP synthase family. As to quaternary structure, homotetramer.

It catalyses the reaction UTP + L-glutamine + ATP + H2O = CTP + L-glutamate + ADP + phosphate + 2 H(+). The enzyme catalyses L-glutamine + H2O = L-glutamate + NH4(+). The catalysed reaction is UTP + NH4(+) + ATP = CTP + ADP + phosphate + 2 H(+). It functions in the pathway pyrimidine metabolism; CTP biosynthesis via de novo pathway; CTP from UDP: step 2/2. Its activity is regulated as follows. Allosterically activated by GTP, when glutamine is the substrate; GTP has no effect on the reaction when ammonia is the substrate. The allosteric effector GTP functions by stabilizing the protein conformation that binds the tetrahedral intermediate(s) formed during glutamine hydrolysis. Inhibited by the product CTP, via allosteric rather than competitive inhibition. Catalyzes the ATP-dependent amination of UTP to CTP with either L-glutamine or ammonia as the source of nitrogen. Regulates intracellular CTP levels through interactions with the four ribonucleotide triphosphates. This chain is CTP synthase, found in Methylobacterium nodulans (strain LMG 21967 / CNCM I-2342 / ORS 2060).